Reading from the N-terminus, the 205-residue chain is Small ribosomal subunit protein uS4 (205 aa).

Positions 1-16 are enriched in basic and acidic residues; the sequence is MSKRESAKHKIDRRLG. The segment at 1–46 is disordered; that stretch reads MSKRESAKHKIDRRLGENIWGRPKSPVNRREYGPGQHGQRRKGKLS. Residues 94–157 enclose the S4 RNA-binding domain; sequence SRLDAVVYRA…KQLAIVLEAV (64 aa).

Belongs to the universal ribosomal protein uS4 family. As to quaternary structure, part of the 30S ribosomal subunit. Contacts protein S5. The interaction surface between S4 and S5 is involved in control of translational fidelity.

Functionally, one of the primary rRNA binding proteins, it binds directly to 16S rRNA where it nucleates assembly of the body of the 30S subunit. Its function is as follows. With S5 and S12 plays an important role in translational accuracy. This Brucella abortus (strain S19) protein is Small ribosomal subunit protein uS4.